Here is a 349-residue protein sequence, read N- to C-terminus: Micronemal protein 6 (349 aa).

Residues 1–23 (MRLFRCCAAAVVAAESLLWLKNG) form the signal peptide. 3 EGF-like domains span residues 36-80 (IADN…VTCM), 96-134 (TPAACSSNPCGPEAAGTCKETNSGYICRCNQGYRISLDG), and 147-192 (GCEE…ITCK). Disulfide bonds link Cys-40–Cys-53, Cys-45–Cys-62, Cys-64–Cys-79, Cys-100–Cys-113, Cys-105–Cys-122, Cys-124–Cys-140, Cys-148–Cys-162, Cys-153–Cys-173, and Cys-175–Cys-191. The tract at residues 194 to 291 (VPPHYRKPPF…EEGSGHAGAI (98 aa)) is disordered. The acidic domain stretch occupies residues 204-283 (EFGKGGHPVD…SEEQGKEREE (80 aa)). 2 stretches are compositionally biased toward basic and acidic residues: residues 210–247 (HPVDSEPSKRQREDEGESREPESDSTEPGRDQERRTPL) and 276–285 (EQGKEREEGS). A helical membrane pass occupies residues 290–310 (AIAGGVIGGLLLLSAAGAGVA).

In terms of assembly, interacts directly with MIC1. Part of the MIC6-MIC1-MIC4 complex. Post-translationally, subject to proteolytic processing involving both the N-terminus and the C-terminus. The first EGF-like domain (EGF-like domain 1) is removed by proteolytic cleavage by ASP3 and is not present in the mature protein. Released as soluble 35 kDa protein after proteolytic processing at the C-terminus.

Its subcellular location is the cytoplasmic vesicle. The protein localises to the secretory vesicle. The protein resides in the microneme membrane. It is found in the secreted. Escorter protein required for import of MIC1 and MIC4 adhesins into the microneme. The sequence is that of Micronemal protein 6 from Toxoplasma gondii.